A 120-amino-acid polypeptide reads, in one-letter code: Large ribosomal subunit protein uL18 (120 aa).

It belongs to the universal ribosomal protein uL18 family. As to quaternary structure, part of the 50S ribosomal subunit; part of the 5S rRNA/L5/L18/L25 subcomplex. Contacts the 5S and 23S rRNAs.

Its function is as follows. This is one of the proteins that bind and probably mediate the attachment of the 5S RNA into the large ribosomal subunit, where it forms part of the central protuberance. The chain is Large ribosomal subunit protein uL18 from Clostridium botulinum (strain Eklund 17B / Type B).